The primary structure comprises 116 residues: Large ribosomal subunit protein bL19 (116 aa).

Belongs to the bacterial ribosomal protein bL19 family.

Its function is as follows. This protein is located at the 30S-50S ribosomal subunit interface and may play a role in the structure and function of the aminoacyl-tRNA binding site. The polypeptide is Large ribosomal subunit protein bL19 (Mannheimia succiniciproducens (strain KCTC 0769BP / MBEL55E)).